A 236-amino-acid chain; its full sequence is Baculoviral IAP repeat-containing protein 8 (236 aa).

The BIR repeat unit spans residues 7–70 (RLITFGTWMY…KWYPGCKYLL (64 aa)). Residues C39, C42, H59, and C66 each coordinate Zn(2+). Residues 189 to 224 (CKICMDRHIAVVFIPCGHLVTCKQCAEAVDRCPMCS) form an RING-type zinc finger.

It belongs to the IAP family. Binds to caspase-9. Testis specific in normal tissues.

The protein resides in the cytoplasm. Protects against apoptosis mediated by BAX. This chain is Baculoviral IAP repeat-containing protein 8 (BIRC8), found in Homo sapiens (Human).